A 145-amino-acid polypeptide reads, in one-letter code: Large ribosomal subunit protein uL14m (145 aa).

A mitochondrion-targeting transit peptide spans 1–30; that stretch reads MAVLTGLFGFFAYVRGAVSQRCFSTSGSLS.

This sequence belongs to the universal ribosomal protein uL14 family. Component of the mitochondrial ribosome large subunit (39S) which comprises a 16S rRNA and about 50 distinct proteins. Interacts with MALSU1.

The protein resides in the mitochondrion. Functionally, may form part of 2 intersubunit bridges in the assembled ribosome. Upon binding to MALSU1, intersubunit bridge formation is blocked, preventing ribosome formation and repressing translation. In Rattus norvegicus (Rat), this protein is Large ribosomal subunit protein uL14m (Mrpl14).